The sequence spans 759 residues: TSK-associating protein 1 (759 aa).

The first 29 residues, Met1 to Cys29, serve as a signal peptide directing secretion. The tract at residues Gly55–Thr74 is disordered. Residues Ala63–Thr74 show a composition bias toward polar residues. 10 EFE repeat repeats span residues Val91 to Leu138, Ser139 to His176, Ser177 to His215, Ser216 to Gln254, Ser255 to His293, Ala294 to His329, Phe330 to Gln368, Ser369 to Gln407, Ser408 to Glu443, and Ser444 to Glu473. The 10 X approximate EFE repeat stretch occupies residues Val91 to Glu473. 2 coiled-coil regions span residues Arg142–Ala461 and Ile685–Glu734. Disordered regions lie at residues Glu154–Leu184, Gln200–Arg219, Ala271–Ala332, and Leu393–Met414.

In terms of assembly, homomultimer. Interacts (via C-terminal domain) with GIP1, CSN1 (via N-terminal domain) and TSK (via TPR repeats). Post-translationally, binds calcium through the EFE repeats. In terms of tissue distribution, expressed preferentially in flowers and shoot apex.

Its subcellular location is the endoplasmic reticulum lumen. It is found in the nucleus envelope. The protein resides in the cytoplasm. Functionally, involved in seedling development in the dark. May be involved, when interacting with TSK, in the organization of spindle microtubules and may participate, when interacting with GIP1, in structural links between the nuclear envelope and the cytoskeleton. In Arabidopsis thaliana (Mouse-ear cress), this protein is TSK-associating protein 1 (TSA1).